An 880-amino-acid polypeptide reads, in one-letter code: Pyruvate, phosphate dikinase (880 aa).

Residues 1 to 348 (MNKLIYYFGN…LYILQTRTAK (348 aa)) are N-terminal. Arg97 is an ATP binding site. The segment at 349–405 (RTAIAAINIAVQMVKEKLISKEQALMRIDPESLNQLLHTRIDYSKGLTSIAEGLPAS) is linker 1. The segment at 406-503 (PGAATGIVVF…VIKQGDIITI (98 aa)) is central. Thr458 bears the Phosphothreonine; by PDRP1 mark. The active-site Tele-phosphohistidine intermediate is His460. Residues 504-538 (DGGSGKIFLGEMPLIQPTFSEESKLILDWADEISS) are linker 2. A C-terminal region spans residues 539 to 880 (LKVRANAETV…AAQAKIKQGS (342 aa)). Residues Arg566, Arg622, Glu750, Gly771, Thr772, Asn773, and Asp774 each coordinate substrate. Residue Glu750 coordinates Mg(2+). Asp774 contributes to the Mg(2+) binding site. Catalysis depends on Cys836, which acts as the Proton donor.

The protein belongs to the PEP-utilizing enzyme family. Homodimer. Mg(2+) serves as cofactor. Phosphorylation of Thr-458 in the dark inactivates the enzyme. Dephosphorylation upon light stimulation reactivates the enzyme.

The enzyme catalyses pyruvate + phosphate + ATP = phosphoenolpyruvate + AMP + diphosphate + H(+). Its activity is regulated as follows. Activated by light-induced dephosphorylation. Inhibited by dark-induced phosphorylation. Both reactions are catalyzed by PDRP1. Functionally, catalyzes the reversible phosphorylation of pyruvate and phosphate. The chain is Pyruvate, phosphate dikinase (ppdK) from Rickettsia prowazekii (strain Madrid E).